Consider the following 167-residue polypeptide: Gametocyte-specific factor 1 (167 aa).

Ser-8 is subject to Phosphoserine. CHHC U11-48K-type zinc fingers lie at residues 14–41 (LLQC…RKNH) and 48–75 (LATC…DDKS). 8 residues coordinate Zn(2+): Cys-17, His-23, His-33, Cys-37, Cys-51, His-57, His-67, and Cys-71.

The protein belongs to the UPF0224 (FAM112) family. In terms of tissue distribution, expressed abundantly in adult testis, at moderate levels in unfertilized eggs and ovaries and weakly in embryonic stem cells.

The protein localises to the cytoplasm. Its function is as follows. Required for spermatogenesis and is involved in the suppression of retrotransposon transcription in male germ cells. The protein is Gametocyte-specific factor 1 of Mus musculus (Mouse).